Reading from the N-terminus, the 256-residue chain is Ribosomal RNA small subunit methyltransferase J (256 aa).

Residues R104–D105, E120–R121, S156–S157, and D174 contribute to the S-adenosyl-L-methionine site.

It belongs to the methyltransferase superfamily. RsmJ family.

Its subcellular location is the cytoplasm. It carries out the reaction guanosine(1516) in 16S rRNA + S-adenosyl-L-methionine = N(2)-methylguanosine(1516) in 16S rRNA + S-adenosyl-L-homocysteine + H(+). Specifically methylates the guanosine in position 1516 of 16S rRNA. The polypeptide is Ribosomal RNA small subunit methyltransferase J (Yersinia pseudotuberculosis serotype O:1b (strain IP 31758)).